The chain runs to 345 residues: Hemin transport protein HmuS (345 aa).

It to Y.enterocolitica HemS.

Functionally, part of the binding-protein-dependent transport system for hemin. This is Hemin transport protein HmuS (hmuS) from Yersinia pestis.